A 476-amino-acid polypeptide reads, in one-letter code: Monodehydroascorbate reductase 2, peroxisomal (476 aa).

The Cytoplasmic segment spans residues M1–R3. A helical transmembrane segment spans residues A4–A24. Residues G12–A15, E40, R47, K52, and R146–N147 each bind FAD. Residues R25–T447 are Peroxisomal-facing. Residues G171–E177, E195, R201, and G260 each bind NAD(+). An NADP(+)-binding site is contributed by Y173 to E177. Residues R201 and G260 each coordinate NADP(+). Residue D297 coordinates FAD. E314–H315 is an NAD(+) binding site. E314 to H315 contributes to the NADP(+) binding site. V316 serves as a coordination point for FAD. R320 serves as a coordination point for L-ascorbate. Residue Y346 participates in FAD binding. Y346 is an NAD(+) binding site. Y346 lines the NADP(+) pocket. L-ascorbate is bound at residue R348. The chain crosses the membrane as a helical span at residues Y448 to W468. Residues Y469 to W476 lie on the Cytoplasmic side of the membrane.

This sequence belongs to the FAD-dependent oxidoreductase family. The cofactor is FAD.

Its subcellular location is the peroxisome membrane. It carries out the reaction 2 monodehydro-L-ascorbate radical + NADH + H(+) = 2 L-ascorbate + NAD(+). Functionally, catalyzes the conversion of monodehydroascorbate to ascorbate, oxidizing NADH in the process. Ascorbate is a major antioxidant against reactive oxygen species (ROS) and nitric oxide (NO). The sequence is that of Monodehydroascorbate reductase 2, peroxisomal from Oryza sativa subsp. japonica (Rice).